Consider the following 695-residue polypeptide: Elongation factor G (695 aa).

The region spanning 9 to 283 (EKIRNIGIVA…AVIDYLPSPL (275 aa)) is the tr-type G domain. GTP contacts are provided by residues 18-25 (AHIDAGKT), 82-86 (DTPGH), and 136-139 (NKMD).

It belongs to the TRAFAC class translation factor GTPase superfamily. Classic translation factor GTPase family. EF-G/EF-2 subfamily.

It is found in the cytoplasm. Catalyzes the GTP-dependent ribosomal translocation step during translation elongation. During this step, the ribosome changes from the pre-translocational (PRE) to the post-translocational (POST) state as the newly formed A-site-bound peptidyl-tRNA and P-site-bound deacylated tRNA move to the P and E sites, respectively. Catalyzes the coordinated movement of the two tRNA molecules, the mRNA and conformational changes in the ribosome. This chain is Elongation factor G, found in Petrotoga mobilis (strain DSM 10674 / SJ95).